Here is a 190-residue protein sequence, read N- to C-terminus: Orotate phosphoribosyltransferase (190 aa).

5-phospho-alpha-D-ribose 1-diphosphate-binding positions include arginine 101, lysine 102, lysine 105, histidine 107, and 128 to 136; that span reads EDVVTTGGS. Orotate is bound by residues threonine 132 and arginine 160.

It belongs to the purine/pyrimidine phosphoribosyltransferase family. PyrE subfamily. In terms of assembly, homodimer. Requires Mg(2+) as cofactor.

It catalyses the reaction orotidine 5'-phosphate + diphosphate = orotate + 5-phospho-alpha-D-ribose 1-diphosphate. Its pathway is pyrimidine metabolism; UMP biosynthesis via de novo pathway; UMP from orotate: step 1/2. Its function is as follows. Catalyzes the transfer of a ribosyl phosphate group from 5-phosphoribose 1-diphosphate to orotate, leading to the formation of orotidine monophosphate (OMP). This Synechococcus sp. (strain CC9605) protein is Orotate phosphoribosyltransferase.